A 445-amino-acid chain; its full sequence is Probable glycine dehydrogenase (decarboxylating) subunit 1 (445 aa).

Belongs to the GcvP family. N-terminal subunit subfamily. In terms of assembly, the glycine cleavage system is composed of four proteins: P, T, L and H. In this organism, the P 'protein' is a heterodimer of two subunits.

The catalysed reaction is N(6)-[(R)-lipoyl]-L-lysyl-[glycine-cleavage complex H protein] + glycine + H(+) = N(6)-[(R)-S(8)-aminomethyldihydrolipoyl]-L-lysyl-[glycine-cleavage complex H protein] + CO2. The glycine cleavage system catalyzes the degradation of glycine. The P protein binds the alpha-amino group of glycine through its pyridoxal phosphate cofactor; CO(2) is released and the remaining methylamine moiety is then transferred to the lipoamide cofactor of the H protein. This chain is Probable glycine dehydrogenase (decarboxylating) subunit 1, found in Citrifermentans bemidjiense (strain ATCC BAA-1014 / DSM 16622 / JCM 12645 / Bem) (Geobacter bemidjiensis).